We begin with the raw amino-acid sequence, 190 residues long: Cancer-related nucleoside-triphosphatase homolog (190 aa).

At Ala-2 the chain carries N-acetylalanine. ATP is bound by residues 9–16 (GPPGVGKT) and 109–116 (ICVIDEVG). Lys-165 carries the N6-acetyllysine modification.

Belongs to the THEP1 NTPase family. In terms of assembly, monomer.

The enzyme catalyses a ribonucleoside 5'-triphosphate + H2O = a ribonucleoside 5'-diphosphate + phosphate + H(+). It carries out the reaction 5-methyl-UTP + H2O = 5-methyl-UDP + phosphate + H(+). The catalysed reaction is CTP + H2O = CDP + phosphate + H(+). It catalyses the reaction ATP + H2O = ADP + phosphate + H(+). The enzyme catalyses GTP + H2O = GDP + phosphate + H(+). Its function is as follows. Has nucleotide phosphatase activity towards ATP, GTP, CTP, TTP and UTP. Hydrolyzes nucleoside diphosphates with lower efficiency. The protein is Cancer-related nucleoside-triphosphatase homolog (NTPCR) of Bos taurus (Bovine).